The following is a 237-amino-acid chain: Uridylate kinase (237 aa).

10–13 (KLSG) contacts ATP. Gly51 is a UMP binding site. The ATP site is built by Gly52 and Arg56. Residues Asp71 and 133-140 (TGNPCFTT) each bind UMP. Residues Thr160, Tyr166, and Asp169 each coordinate ATP.

This sequence belongs to the UMP kinase family. In terms of assembly, homohexamer.

The protein resides in the cytoplasm. The catalysed reaction is UMP + ATP = UDP + ADP. It functions in the pathway pyrimidine metabolism; CTP biosynthesis via de novo pathway; UDP from UMP (UMPK route): step 1/1. Its activity is regulated as follows. Inhibited by UTP. Catalyzes the reversible phosphorylation of UMP to UDP. This chain is Uridylate kinase, found in Vesicomyosocius okutanii subsp. Calyptogena okutanii (strain HA).